Consider the following 1002-residue polypeptide: Glutamate receptor ionotropic, NMDA 3B (1002 aa).

The first 24 residues, 1–24 (MESVRTLWLSVALALAVGSRVVRG), serve as a signal peptide directing secretion. Residues 25 to 574 (HPQPCRVPTR…PIGAFMWPLH (550 aa)) lie on the Extracellular side of the membrane. 5 N-linked (GlcNAc...) asparagine glycosylation sites follow: Asn-69, Asn-212, Asn-344, Asn-451, and Asn-465. Disulfide bonds link Cys-439/Cys-475 and Cys-445/Cys-476. Glycine contacts are provided by Ser-531, Ser-533, and Arg-538. D-serine contacts are provided by Ser-533 and Arg-538. The helical transmembrane segment at 575 to 594 (WSMWVGVFAALHLTALFLTL) threads the bilayer. Residues 595 to 615 (YEWRSPYGLTPRGRNRGTVFS) are Cytoplasmic-facing. An intramembrane region (discontinuously helical) is located at residues 616-627 (YSSALNLCYAIL). The Cytoplasmic segment spans residues 628–641 (FGRTVSSKTPKCPT). A helical transmembrane segment spans residues 642-661 (GRFLMNLWAIFCLLVLSSYT). Over 662 to 832 (ANLAAVMVGD…TLQMGVYHFS (171 aa)) the chain is Extracellular. A glycine-binding site is contributed by Ser-701. Ser-701, Ala-702, and Asp-745 together coordinate D-serine. Asp-745 lines the glycine pocket. Asn-786 is a glycosylation site (N-linked (GlcNAc...) asparagine). A helical membrane pass occupies residues 833–848 (GLFVLLCLGLGSALLT). Over 849-1002 (SLGEHVFYRL…RLLHAAPAES (154 aa)) the chain is Cytoplasmic. Residues 882–910 (ALNTGPPEGQQERAEQERSGPKDELPATD) form a disordered region. A compositionally biased stretch (basic and acidic residues) spans 891 to 906 (QQERAEQERSGPKDEL). The stretch at 944 to 985 (LCSNGPGLQAELRELELRIEAARERLRSALLRRGELRALLGD) forms a coiled coil. The interval 951–984 (LQAELRELELRIEAARERLRSALLRRGELRALLG) is involved in the trafficking and surface expression of NMDARs.

The protein belongs to the glutamate-gated ion channel (TC 1.A.10.1) family. NR3B/GRIN3B subfamily. In terms of assembly, forms heterotetrameric channels that contain at least two GluN1 subunits and at least a combination of one GluN2 and one GluN3 subunits (in vitro). Forms heterotetrameric channels composed of two GluN1/zeta subunits (GRIN1), and two identical GluN3 subunits (GRIN3A or GRIN3B) (in vitro). Does not form functional homomeric channels. Expressed in the hippocampus, the corpus callosum, in the facial and trigeminal nuclei of the brainstem and the ventral horn of the spinal cord.

It is found in the cell membrane. The protein resides in the postsynaptic cell membrane. The catalysed reaction is Ca(2+)(in) = Ca(2+)(out). It catalyses the reaction Na(+)(in) = Na(+)(out). Excitatory glycine receptors are inhibited by D-serine at a concentrion of 100uM. In terms of biological role, component of a non-conventional N-methyl-D-aspartate (NMDA) receptors (NMDARs) that function as heterotetrameric, ligand-gated cation channels with low calcium permeability and low voltage-dependent block by Mg(2+). Forms glutamatergic receptor complexes with GluN1 and GluN2 subunits which are activated by glycine binding to the GluN1 and GluN3 subunits and L-glutamate binding to GluN2 subunits. Forms excitatory glycinergic receptor complexes with GluN1 alone which are activated by glycine binding to the GluN1 and GluN3 subunits. GluN3B subunit also binds D-serine and, in the absence of glycine, activates glycinergic receptor complexes, but with lower efficacy than glycine. Each GluN3 subunit confers differential attributes to channel properties, including activation, deactivation and desensitization kinetics, pH sensitivity, Ca2(+) permeability, and binding to allosteric modulators. The sequence is that of Glutamate receptor ionotropic, NMDA 3B from Rattus norvegicus (Rat).